The sequence spans 475 residues: WASH complex subunit 1 (475 aa).

Residues 1–54 (MTAVKTQHSLAGQVYAVPLIQPDLRREEAIQQVADALQYLQNISGDIFSRISQR) are required for WASH complex assembly. Residues 1 to 167 (MTAVKTQHSL…EGLGGLPSNI (167 aa)) form a WHD1 region. Residue lysine 219 forms a Glycyl lysine isopeptide (Lys-Gly) (interchain with G-Cter in ubiquitin) linkage. Residues 296 to 475 (EDGALLAPPP…GDEDEDDWES (180 aa)) form a disordered region. Over residues 302–318 (APPPPPPPPPPPPPPAP) the composition is skewed to pro residues. Positions 357–475 (QGAPKEVVDP…GDEDEDDWES (119 aa)) are VCA. The 23-residue stretch at 369 to 391 (GRATLLESIRQAGGIGKAKLRSV) folds into the WH2 domain. Basic and acidic residues predominate over residues 390-406 (SVKERKLEKKKQKEQEQ). The segment covering 432-446 (SGKGPGTGTSEGPGG) has biased composition (gly residues). A compositionally biased stretch (acidic residues) spans 466 to 475 (GDEDEDDWES).

Belongs to the WASH1 family. As to quaternary structure, component of the WASH core complex also described as WASH regulatory complex SHRC composed of WASHC1, WASHC2, WASHC3, WASHC4 and WASHC5. The WASH core complex associates with the F-actin-capping protein dimer (formed by CAPZA1, CAPZA2 or CAPZA3 and CAPZB) in a transient or substoichiometric manner which was initially described as WASH complex. Interacts (via WHD1 region) with WASHC2; the interaction is direct. Interacts with BECN1; WASHC1 and AMBRA1 can competitively interact with BECN1. Interacts with BLOC1S2; may associate with the BLOC-1 complex. Interacts with tubulin gamma chain (TUBG1 or TUBG2). Interacts with TBC1D23. In terms of processing, ubiquitinated at Lys-219 via 'Lys-63'-linked ubiquitin chains by the TRIM27:MAGEL2 E3 ubiquitin ligase complex, leading to promote endosomal F-actin assembly.

Its subcellular location is the early endosome membrane. It localises to the recycling endosome membrane. Acts as a component of the WASH core complex that functions as a nucleation-promoting factor (NPF) at the surface of endosomes, where it recruits and activates the Arp2/3 complex to induce actin polymerization, playing a key role in the fission of tubules that serve as transport intermediates during endosome sorting. Regulates the trafficking of endosomal alpha5beta1 integrin to the plasma membrane and involved in invasive cell migration. In T-cells involved in endosome-to-membrane recycling of receptors including T-cell receptor (TCR), CD28 and ITGAL; proposed to be implicated in T-cell proliferation and effector function. In dendritic cells involved in endosome-to-membrane recycling of major histocompatibility complex (MHC) class II probably involving retromer and subsequently allowing antigen sampling, loading and presentation during T-cell activation. Involved in cytokinesis and following polar body extrusion during oocyte meiotic maturation. Involved in Arp2/3 complex-dependent actin assembly driving Salmonella typhimurium invasion independent of ruffling. Involved in the exocytosis of MMP14 leading to matrix remodeling during invasive migration and implicating late endosome-to-plasma membrane tubular connections and cooperation with the exocyst complex. Involved in negative regulation of autophagy independently from its role in endosomal sorting by inhibiting BECN1 ubiquitination to inactivate PIK3C3/Vps34 activity. This chain is WASH complex subunit 1, found in Rattus norvegicus (Rat).